Reading from the N-terminus, the 273-residue chain is Undecaprenyl-diphosphatase (273 aa).

7 consecutive transmembrane segments (helical) span residues 4 to 24 (LILL…FLPI), 43 to 63 (KAKV…CWEY), 82 to 102 (FVIN…LFIK), 108 to 128 (LFHP…ILWA), 183 to 203 (AAEF…FYDV), 217 to 237 (MFAT…RGFI), and 248 to 268 (FAWY…SGLV).

Belongs to the UppP family.

Its subcellular location is the cell inner membrane. It catalyses the reaction di-trans,octa-cis-undecaprenyl diphosphate + H2O = di-trans,octa-cis-undecaprenyl phosphate + phosphate + H(+). Functionally, catalyzes the dephosphorylation of undecaprenyl diphosphate (UPP). Confers resistance to bacitracin. The chain is Undecaprenyl-diphosphatase from Nitrosomonas europaea (strain ATCC 19718 / CIP 103999 / KCTC 2705 / NBRC 14298).